A 177-amino-acid polypeptide reads, in one-letter code: Shikimate kinase (177 aa).

ATP is bound at residue Gly-17–Thr-22. Ser-21 lines the Mg(2+) pocket. Substrate is bound by residues Asp-39, Arg-63, and Gly-85. ATP is bound at residue Arg-123. Arg-142 is a substrate binding site. ATP is bound at residue Arg-160.

Belongs to the shikimate kinase family. As to quaternary structure, monomer. The cofactor is Mg(2+).

The protein resides in the cytoplasm. It catalyses the reaction shikimate + ATP = 3-phosphoshikimate + ADP + H(+). The protein operates within metabolic intermediate biosynthesis; chorismate biosynthesis; chorismate from D-erythrose 4-phosphate and phosphoenolpyruvate: step 5/7. Its function is as follows. Catalyzes the specific phosphorylation of the 3-hydroxyl group of shikimic acid using ATP as a cosubstrate. This Halorhodospira halophila (strain DSM 244 / SL1) (Ectothiorhodospira halophila (strain DSM 244 / SL1)) protein is Shikimate kinase.